Here is a 74-residue protein sequence, read N- to C-terminus: MSKFILLVCILLLTTNIVSAASKCGRHGDSCVSSSDCCPGTWCHTYANRCQVRITEEELMKQREKILGRKGKDY.

Residues 1–20 form the signal peptide; sequence MSKFILLVCILLLTTNIVSA. Intrachain disulfides connect cysteine 24–cysteine 38, cysteine 31–cysteine 43, and cysteine 37–cysteine 50.

In terms of tissue distribution, highly expressed in brain. Is also found in hemolymph.

Its function is as follows. The impact of this protein on the neuronal activity of the honeybee brain is not known. It does not affect apparent movement or hatching of blowfly larvae. However, when injected into fish, it induces a strong reversible paralytic effect. In addition, the presence of this small peptide in the hemolymph of adult drones together with its induction after bacterial infection suggests that this peptide exhibits antibacterial activity. This peptide may act by inhibiting ion channels. This chain is Omega-conotoxin-like protein 1, found in Apis mellifera (Honeybee).